A 384-amino-acid polypeptide reads, in one-letter code: Glycerol 3-phosphate oxidase (384 aa).

A signal peptide spans 1–17 (MQTIDVLIVGGGVIGTS). FAD is bound at residue I14. C18 is lipidated: N-palmitoyl cysteine. C18 is lipidated: S-diacylglycerol cysteine. FAD contacts are provided by residues E33, 42–43 (TS), and 47–49 (SGV). The sn-glycerol 3-phosphate site is built by S47 and H51. The active-site Proton acceptor is the H51. FAD is bound at residue V177. The sn-glycerol 3-phosphate site is built by K258 and R320. 346-347 (MK) serves as a coordination point for FAD. Residue S348 participates in sn-glycerol 3-phosphate binding. T352 contributes to the FAD binding site.

As to quaternary structure, monomer. Requires FAD as cofactor.

The protein localises to the cytoplasm. It is found in the cell membrane. The enzyme catalyses sn-glycerol 3-phosphate + O2 = dihydroxyacetone phosphate + H2O2. Its pathway is polyol metabolism; glycerol degradation via glycerol kinase pathway; glycerone phosphate from sn-glycerol 3-phosphate (aerobic route): step 1/1. Its function is as follows. Catalyzes the oxidation of glycerol 3-phosphate to dihydroxyacetone phosphate (DHAP), with a reduction of O2 to H2O2. The formation of hydrogen peroxide by this enzyme is crucial for cytotoxic effects on host cells. Does not show any dehydrogenase activity with NAD(+). This Mycoplasma genitalium (strain ATCC 33530 / DSM 19775 / NCTC 10195 / G37) (Mycoplasmoides genitalium) protein is Glycerol 3-phosphate oxidase.